The following is a 94-amino-acid chain: Pyrimidine/purine nucleoside phosphorylase (94 aa).

Belongs to the nucleoside phosphorylase PpnP family.

The enzyme catalyses a purine D-ribonucleoside + phosphate = a purine nucleobase + alpha-D-ribose 1-phosphate. It catalyses the reaction adenosine + phosphate = alpha-D-ribose 1-phosphate + adenine. It carries out the reaction cytidine + phosphate = cytosine + alpha-D-ribose 1-phosphate. The catalysed reaction is guanosine + phosphate = alpha-D-ribose 1-phosphate + guanine. The enzyme catalyses inosine + phosphate = alpha-D-ribose 1-phosphate + hypoxanthine. It catalyses the reaction thymidine + phosphate = 2-deoxy-alpha-D-ribose 1-phosphate + thymine. It carries out the reaction uridine + phosphate = alpha-D-ribose 1-phosphate + uracil. The catalysed reaction is xanthosine + phosphate = alpha-D-ribose 1-phosphate + xanthine. Functionally, catalyzes the phosphorolysis of diverse nucleosides, yielding D-ribose 1-phosphate and the respective free bases. Can use uridine, adenosine, guanosine, cytidine, thymidine, inosine and xanthosine as substrates. Also catalyzes the reverse reactions. The sequence is that of Pyrimidine/purine nucleoside phosphorylase from Pseudomonas fluorescens (strain ATCC BAA-477 / NRRL B-23932 / Pf-5).